An 800-amino-acid chain; its full sequence is Putative antiporter subunit mnhA2 (800 aa).

The next 20 helical transmembrane spans lie at 1-21 (MSLV…LLMS), 33-53 (IALV…PSVA), 78-98 (GLSL…FFYA), 118-138 (LFMF…MYIF), 167-187 (FMIT…LYIM), 207-227 (GLFI…SAQF), 241-261 (TPVS…FLLL), 273-293 (YVYI…ITAL), 300-320 (GILA…VGIG), 331-351 (IASI…NHAI), 387-407 (LVMT…GFLS), 424-444 (FSLI…VFTF), 472-492 (PWLF…IFFV), 527-547 (GFNI…VLAI), 595-615 (IIMT…RIGL), 627-647 (GALE…LIFI), 651-671 (LTMV…FIAM), 676-696 (LALT…VSFS), 712-732 (IIKI…IFIT), and 768-788 (LDTL…YTLL).

This sequence belongs to the CPA3 antiporters (TC 2.A.63) subunit A family. In terms of assembly, may form a heterooligomeric complex that consists of seven subunits: mnhA2, mnhB2, mnhC2, mnhD2, mnhE2, mnhF2 and mnhG2.

It localises to the cell membrane. The sequence is that of Putative antiporter subunit mnhA2 (mnhA2) from Staphylococcus aureus (strain MSSA476).